The chain runs to 41 residues: uncharacterized protein (41 aa).

Residues 10–32 form a helical membrane-spanning segment; it reads LIILAVPFMIKTSLKTNLIFFFL.

It is found in the cell inner membrane. This is an uncharacterized protein from Escherichia coli (strain K12).